A 359-amino-acid polypeptide reads, in one-letter code: 5-amino-6-(D-ribitylamino)uracil--L-tyrosine 4-hydroxyphenyl transferase (359 aa).

The region spanning 45–282 (VTYVVNANIN…TYAVSRIFFK (238 aa)) is the Radical SAM core domain. [4Fe-4S] cluster-binding residues include C59, C63, and C66.

This sequence belongs to the radical SAM superfamily. CofH family. Consists of two subunits, CofG and CofH. [4Fe-4S] cluster serves as cofactor.

The enzyme catalyses 5-amino-6-(D-ribitylamino)uracil + L-tyrosine + S-adenosyl-L-methionine = 5-amino-5-(4-hydroxybenzyl)-6-(D-ribitylimino)-5,6-dihydrouracil + 2-iminoacetate + 5'-deoxyadenosine + L-methionine + H(+). The protein operates within cofactor biosynthesis; coenzyme F0 biosynthesis. In terms of biological role, catalyzes the radical-mediated synthesis of 5-amino-5-(4-hydroxybenzyl)-6-(D-ribitylimino)-5,6-dihydrouracil from 5-amino-6-(D-ribitylamino)uracil and L-tyrosine. This chain is 5-amino-6-(D-ribitylamino)uracil--L-tyrosine 4-hydroxyphenyl transferase, found in Methanococcus maripaludis (strain C6 / ATCC BAA-1332).